The chain runs to 328 residues: Fe(3+) ions import ATP-binding protein FbpC 1 (328 aa).

Positions 7–237 (LVLKNITKAF…PNSLFLANFM (231 aa)) constitute an ABC transporter domain. Residue 39–46 (GPSGCGKT) coordinates ATP.

This sequence belongs to the ABC transporter superfamily. Fe(3+) ion importer (TC 3.A.1.10) family. As to quaternary structure, the complex is composed of two ATP-binding proteins (FbpC), two transmembrane proteins (FbpB) and a solute-binding protein (FbpA).

It is found in the cell inner membrane. The enzyme catalyses Fe(3+)(out) + ATP + H2O = Fe(3+)(in) + ADP + phosphate + H(+). In terms of biological role, part of the ABC transporter complex FbpABC involved in Fe(3+) ions import. Responsible for energy coupling to the transport system. The sequence is that of Fe(3+) ions import ATP-binding protein FbpC 1 from Haemophilus influenzae (strain ATCC 51907 / DSM 11121 / KW20 / Rd).